The following is a 379-amino-acid chain: Gonadotropin-releasing hormone II receptor (379 aa).

The Extracellular segment spans residues 1-40 (MSAGNGTPWGSAAGEESWAASGVAVEGSELPTFSAAAKVR). Residues 41-60 (VGVTIVLFVSSAGGNLAVLW) form a helical membrane-spanning segment. Residues 61–76 (SVTRPQPSQLRPSPVR) are Cytoplasmic-facing. Residues 77–96 (TLFAHLAAADLLVTFVVMPL) traverse the membrane as a helical segment. Residues 97 to 114 (DATWNITVQWLAEDIACR) lie on the Extracellular side of the membrane. Asn-101 is a glycosylation site (N-linked (GlcNAc...) asparagine). The cysteines at positions 113 and 188 are disulfide-linked. Residues 115-136 (TLMFLKLMAMYSAAFLPVVIGL) traverse the membrane as a helical segment. Residues 137–160 (DRQAAVLNPLGSRSGVRKLLGAAW) are Cytoplasmic-facing. The chain crosses the membrane as a helical span at residues 161-178 (GLSFLLALPQLFLFHTVH). The Extracellular segment spans residues 179 to 204 (RAGPVPFTQCVTKGSFKARWQETTYN). A helical membrane pass occupies residues 205–224 (LFTFRCLFLLPLTAMAICYS). Residues 225–278 (HIVLSVSSPQTRKGSHAPAGEFALCRSFDNCPRVRLWALRLALLILLTFILCWT) are Cytoplasmic-facing. The helical transmembrane segment at 279–297 (PYYLLGLWYWFSPTMLTEV) threads the bilayer. At 298–303 (PPSLSH) the chain is on the extracellular side. Residues 304–323 (ILFLFGLLNAPLDPLLYGAF) form a helical membrane-spanning segment. The Cytoplasmic segment spans residues 324 to 379 (TLGCQRGHQELSIDSSNEGSGRMLQQEIHALRQQEVQKTVTSRSAGETKDISITSI).

This sequence belongs to the G-protein coupled receptor 1 family. Phosphorylated on the C-terminal cytoplasmic tail.

It localises to the cell membrane. Receptor for gonadotropin releasing hormone II (GnRH II). This receptor mediates its action by association with G proteins that activate a phosphatidylinositol-calcium second messenger system. The protein is Gonadotropin-releasing hormone II receptor (GNRHR2) of Macaca mulatta (Rhesus macaque).